Consider the following 737-residue polypeptide: Polyribonucleotide nucleotidyltransferase (737 aa).

Asp514 and Asp520 together coordinate Mg(2+). The KH domain occupies 580–639; it reads PRIITVKIPVDKIGEVIGPKGKMINQIQEDTGADITIEDDGTIYIGAQAGSQAEAARATI. Positions 651 to 723 constitute an S1 motif domain; sequence GERYLGTVVK…SRGKLSLIPV (73 aa).

This sequence belongs to the polyribonucleotide nucleotidyltransferase family. It depends on Mg(2+) as a cofactor.

Its subcellular location is the cytoplasm. The catalysed reaction is RNA(n+1) + phosphate = RNA(n) + a ribonucleoside 5'-diphosphate. Functionally, involved in mRNA degradation. Catalyzes the phosphorolysis of single-stranded polyribonucleotides processively in the 3'- to 5'-direction. The protein is Polyribonucleotide nucleotidyltransferase of Streptomyces griseus subsp. griseus (strain JCM 4626 / CBS 651.72 / NBRC 13350 / KCC S-0626 / ISP 5235).